The chain runs to 395 residues: Thyrotropin-releasing hormone receptor (395 aa).

Over 1 to 30 the chain is Extracellular; the sequence is MENGTGDEQNHTGLLLSSQEFVTAEYQVVT. 2 N-linked (GlcNAc...) asparagine glycosylation sites follow: asparagine 3 and asparagine 10. Residues 31–53 traverse the membrane as a helical segment; that stretch reads ILLVLLICGLGIVGNIMVVLVVL. Residues 54-63 lie on the Cytoplasmic side of the membrane; it reads RTKHMRTPTN. A helical transmembrane segment spans residues 64–85; the sequence is CYLVSLAVADLMVLVAAGLPNI. At 86–101 the chain is on the extracellular side; sequence TESLYKSWVYGYVGCL. Cysteine 100 and cysteine 181 are disulfide-bonded. A helical transmembrane segment spans residues 102 to 123; sequence CITYLQYLGINASSFSITAFTI. Residues 124–146 lie on the Cytoplasmic side of the membrane; the sequence is ERYIAICHPIKAQFLCTFSRAKK. The chain crosses the membrane as a helical span at residues 147 to 170; it reads IIIFVWSFASVYCMLWFFLLDLNI. The Extracellular segment spans residues 171–195; the sequence is AVYKDTTVVSCGYKVSRSYYSPIYM. The helical transmembrane segment at 196–217 threads the bilayer; the sequence is MDFGIFYVLPMVLATVLYGLIA. Topologically, residues 218-268 are cytoplasmic; that stretch reads RILFLNPIPSDPKENSNTWKNDMAQQNKTVNSKMTNKSFNSTIASRRQVTK. The helical transmembrane segment at 269–290 threads the bilayer; sequence MLAVVVVLFAFLWMPYRTLVVV. The Extracellular segment spans residues 291-298; the sequence is NSFLSSPF. Residues 299–321 traverse the membrane as a helical segment; sequence QENWFLLFCRICIYLNSAINPVI. The Cytoplasmic portion of the chain corresponds to 322-395; sequence YNLMSQKFRA…IGDTCLSSEA (74 aa).

Belongs to the G-protein coupled receptor 1 family.

It localises to the cell membrane. Functionally, receptor for thyrotropin-releasing hormone (TRH). Upon ligand binding, this G-protein-coupled receptor triggers activation of the phosphatidylinositol (IP3)-calcium-protein kinase C (PKC) pathway. This chain is Thyrotropin-releasing hormone receptor (TRHR), found in Gallus gallus (Chicken).